Consider the following 161-residue polypeptide: 2-C-methyl-D-erythritol 2,4-cyclodiphosphate synthase (161 aa).

Residues aspartate 10 and histidine 12 each coordinate a divalent metal cation. 4-CDP-2-C-methyl-D-erythritol 2-phosphate is bound by residues 10–12 and 36–37; these read DVH and HS. Histidine 44 provides a ligand contact to a divalent metal cation. Residues 58–60, 63–67, 102–108, 134–137, phenylalanine 141, and arginine 144 contribute to the 4-CDP-2-C-methyl-D-erythritol 2-phosphate site; these read DIG, FPDTD, AQVPKMA, and TTTE.

This sequence belongs to the IspF family. In terms of assembly, homotrimer. A divalent metal cation is required as a cofactor.

It carries out the reaction 4-CDP-2-C-methyl-D-erythritol 2-phosphate = 2-C-methyl-D-erythritol 2,4-cyclic diphosphate + CMP. The protein operates within isoprenoid biosynthesis; isopentenyl diphosphate biosynthesis via DXP pathway; isopentenyl diphosphate from 1-deoxy-D-xylulose 5-phosphate: step 4/6. Functionally, involved in the biosynthesis of isopentenyl diphosphate (IPP) and dimethylallyl diphosphate (DMAPP), two major building blocks of isoprenoid compounds. Catalyzes the conversion of 4-diphosphocytidyl-2-C-methyl-D-erythritol 2-phosphate (CDP-ME2P) to 2-C-methyl-D-erythritol 2,4-cyclodiphosphate (ME-CPP) with a corresponding release of cytidine 5-monophosphate (CMP). This chain is 2-C-methyl-D-erythritol 2,4-cyclodiphosphate synthase, found in Shewanella baltica (strain OS223).